The chain runs to 207 residues: Proteasome subunit beta (207 aa).

Positions 1–9 are cleaved as a propeptide — removed in mature form; by autocatalysis; that stretch reads MSNKNTFEG. Catalysis depends on Thr10, which acts as the Nucleophile.

The protein belongs to the peptidase T1B family. In terms of assembly, the 20S proteasome core is composed of 14 alpha and 14 beta subunits that assemble into four stacked heptameric rings, resulting in a barrel-shaped structure. The two inner rings, each composed of seven catalytic beta subunits, are sandwiched by two outer rings, each composed of seven alpha subunits. The catalytic chamber with the active sites is on the inside of the barrel. Has a gated structure, the ends of the cylinder being occluded by the N-termini of the alpha-subunits. Is capped at one or both ends by the proteasome regulatory ATPase, PAN.

It is found in the cytoplasm. It catalyses the reaction Cleavage of peptide bonds with very broad specificity.. Its activity is regulated as follows. The formation of the proteasomal ATPase PAN-20S proteasome complex, via the docking of the C-termini of PAN into the intersubunit pockets in the alpha-rings, triggers opening of the gate for substrate entry. Interconversion between the open-gate and close-gate conformations leads to a dynamic regulation of the 20S proteasome proteolysis activity. In terms of biological role, component of the proteasome core, a large protease complex with broad specificity involved in protein degradation. In Methanobrevibacter ruminantium (strain ATCC 35063 / DSM 1093 / JCM 13430 / OCM 146 / M1) (Methanobacterium ruminantium), this protein is Proteasome subunit beta.